Reading from the N-terminus, the 362-residue chain is Ciliary neurotrophic factor receptor subunit alpha (362 aa).

A signal peptide spans 1–19 (MANPVPSACCVVLAAVVVV). The 81-residue stretch at 23–103 (RHSQQDSHIQ…HLKYQTYLRV (81 aa)) folds into the Ig-like C2-type domain. A disulfide bridge links cysteine 44 with cysteine 87. Residues asparagine 58, asparagine 68, asparagine 140, and asparagine 188 are each glycosylated (N-linked (GlcNAc...) asparagine). 2 consecutive Fibronectin type-III domains span residues 106-203 (PPKE…VKPD) and 204-304 (PPES…TEEP). Residues 288–292 (WSDWS) carry the WSXWS motif motif. Residue aspartate 334 is the site of GPI-anchor amidated aspartate attachment. A propeptide spans 335 to 362 (KGAGVGSGAVAVCWTAGLVLAAYGVLFI) (removed in mature form).

It belongs to the type I cytokine receptor family. Type 3 subfamily. Heterotrimer of the alpha subunit, LIFR and IL6ST. In terms of tissue distribution, highly expressed in nervous system. Also found in skeletal muscle.

Its subcellular location is the cell membrane. Its function is as follows. Binds to CNTF (GPA). The alpha subunit provides the receptor specificity. This Gallus gallus (Chicken) protein is Ciliary neurotrophic factor receptor subunit alpha (CNTFR).